A 502-amino-acid polypeptide reads, in one-letter code: Arabinose import ATP-binding protein AraG (502 aa).

2 consecutive ABC transporter domains span residues 5–240 (LEFS…MVGR) and 253–496 (LGGI…LPDK). 37–44 (GENGAGKS) provides a ligand contact to ATP.

This sequence belongs to the ABC transporter superfamily. Arabinose importer (TC 3.A.1.2.2) family. In terms of assembly, the complex is composed of two ATP-binding proteins (AraG), two transmembrane proteins (AraH) and a solute-binding protein (AraF).

It is found in the cell inner membrane. The catalysed reaction is L-arabinose(out) + ATP + H2O = L-arabinose(in) + ADP + phosphate + H(+). Functionally, part of the ABC transporter complex AraFGH involved in arabinose import. Responsible for energy coupling to the transport system. This is Arabinose import ATP-binding protein AraG from Rhizobium johnstonii (strain DSM 114642 / LMG 32736 / 3841) (Rhizobium leguminosarum bv. viciae).